Here is a 175-residue protein sequence, read N- to C-terminus: MSFPKEGSTIQIHSYKHNGKLHRIWEDTIVLKGTSKVVVAGNDRIIVREADGRNWRTREPAICYFDAEQWFNMICMLRADGIYYYCNLGTPFTWDEEALKYIDYDLDIKVYPDMTMKLLDEDEYELHSKLMKYPPELDVILRKSVDELISWIHQRKGPFAPQFVENWYERYLQYR.

Arginine 23 functions as the Proton donor in the catalytic mechanism. The Mg(2+) site is built by asparagine 87, aspartate 103, aspartate 105, aspartate 107, aspartate 120, and glutamate 123.

This sequence belongs to the Ntdp family. It depends on Mg(2+) as a cofactor.

It carries out the reaction a ribonucleoside 5'-triphosphate + H2O = a ribonucleoside 5'-diphosphate + phosphate + H(+). The enzyme catalyses a ribonucleoside 5'-diphosphate + H2O = a ribonucleoside 5'-phosphate + phosphate + H(+). In terms of biological role, has nucleoside phosphatase activity towards nucleoside triphosphates and nucleoside diphosphates. The sequence is that of Nucleoside triphosphate/diphosphate phosphatase from Shouchella clausii (strain KSM-K16) (Alkalihalobacillus clausii).